The chain runs to 742 residues: Tegument protein UL47 (742 aa).

The segment covering 1-10 has biased composition (basic and acidic residues); sequence MDAARDGRPE. Disordered regions lie at residues 1–128 and 155–199; these read MDAA…TAHL and EFPP…DDAA. The short motif at 10 to 30 is the Nuclear localization signal element; that stretch reads ERRPRRSGTYRTHPFQRPSAR. The segment covering 18–37 has biased composition (low complexity); sequence TYRTHPFQRPSARRSLLDAL. Over residues 38-62 the composition is skewed to basic and acidic residues; sequence RAADAEAAERPRVRRPRPDFQRPPD. Over residues 63–88 the composition is skewed to acidic residues; it reads EDTSEDENVYDYIDGDSSDSADDYDS. The Nuclear export signal motif lies at 95–122; sequence RGPNHGAGDAMDTDAPPERAPEGGAPQD. Residues 485–495 carry the Nuclear export signal motif; the sequence is LSAYLTLFVAL.

Belongs to the alphaherpesvirinae HHV-1 UL47 family. In terms of assembly, interacts with US3 kinase. Interacts with UL31 and UL34; these interactions seem important for efficient virion nuclear egress. Interacts with UL41/VHS. In terms of processing, phosphorylated by US3. This phosphorylation is required for proper nuclear localization.

The protein resides in the virion tegument. It localises to the host nucleus. The protein localises to the host cytoplasm. Its function is as follows. Tegument protein that can bind to various RNA transcripts. Plays a role in the attenuation of selective viral and cellular mRNA degradation by modulating the activity of host shutoff RNase UL41/VHS. Also plays a role in the primary envelopment of virions in the perinuclear space, probably by interacting with two nuclear egress proteins UL31 and UL34. This chain is Tegument protein UL47, found in Bos taurus (Bovine).